The primary structure comprises 1072 residues: Carbamoyl phosphate synthase large chain (1072 aa).

The interval 1–401 (MPKYKDINKV…SLLKAVRSLE (401 aa)) is carboxyphosphate synthetic domain. The ATP site is built by R129, R169, G175, G176, K208, L210, E215, G241, V242, H243, Q284, and E298. Positions 133–327 (KRKMQEIGEP…IAKIAAKIAI (195 aa)) constitute an ATP-grasp 1 domain. Residues Q284, E298, and N300 each contribute to the Mg(2+) site. Positions 284, 298, and 300 each coordinate Mn(2+). The tract at residues 402 to 544 (IKAYGLRLNN…YIYSTYGEED (143 aa)) is oligomerization domain. The interval 545-929 (EVEIHDMPKV…ALYKALEGAG (385 aa)) is carbamoyl phosphate synthetic domain. The ATP-grasp 2 domain maps to 671–861 (SKLLRELNIN…MVKLAVEVAL (191 aa)). Positions 707, 746, 748, 752, 777, 778, 779, 780, 820, and 832 each coordinate ATP. The Mg(2+) site is built by Q820, E832, and N834. Positions 820, 832, and 834 each coordinate Mn(2+). The region spanning 930–1072 (LKIPKKGKIL…QKDNVKNLVL (143 aa)) is the MGS-like domain. The interval 930–1072 (LKIPKKGKIL…QKDNVKNLVL (143 aa)) is allosteric domain.

Belongs to the CarB family. In terms of assembly, composed of two chains; the small (or glutamine) chain promotes the hydrolysis of glutamine to ammonia, which is used by the large (or ammonia) chain to synthesize carbamoyl phosphate. Tetramer of heterodimers (alpha,beta)4. Mg(2+) serves as cofactor. Requires Mn(2+) as cofactor.

It catalyses the reaction hydrogencarbonate + L-glutamine + 2 ATP + H2O = carbamoyl phosphate + L-glutamate + 2 ADP + phosphate + 2 H(+). It carries out the reaction hydrogencarbonate + NH4(+) + 2 ATP = carbamoyl phosphate + 2 ADP + phosphate + 2 H(+). It functions in the pathway amino-acid biosynthesis; L-arginine biosynthesis; carbamoyl phosphate from bicarbonate: step 1/1. The protein operates within pyrimidine metabolism; UMP biosynthesis via de novo pathway; (S)-dihydroorotate from bicarbonate: step 1/3. Functionally, large subunit of the glutamine-dependent carbamoyl phosphate synthetase (CPSase). CPSase catalyzes the formation of carbamoyl phosphate from the ammonia moiety of glutamine, carbonate, and phosphate donated by ATP, constituting the first step of 2 biosynthetic pathways, one leading to arginine and/or urea and the other to pyrimidine nucleotides. The large subunit (synthetase) binds the substrates ammonia (free or transferred from glutamine from the small subunit), hydrogencarbonate and ATP and carries out an ATP-coupled ligase reaction, activating hydrogencarbonate by forming carboxy phosphate which reacts with ammonia to form carbamoyl phosphate. This Thermoanaerobacter pseudethanolicus (strain ATCC 33223 / 39E) (Clostridium thermohydrosulfuricum) protein is Carbamoyl phosphate synthase large chain.